A 72-amino-acid chain; its full sequence is Translation initiation factor IF-1 (72 aa).

In terms of domain architecture, S1-like spans 1–72; it reads MAKEDVIEIE…TRGRITYRFK (72 aa).

It belongs to the IF-1 family. As to quaternary structure, component of the 30S ribosomal translation pre-initiation complex which assembles on the 30S ribosome in the order IF-2 and IF-3, IF-1 and N-formylmethionyl-tRNA(fMet); mRNA recruitment can occur at any time during PIC assembly.

It localises to the cytoplasm. One of the essential components for the initiation of protein synthesis. Stabilizes the binding of IF-2 and IF-3 on the 30S subunit to which N-formylmethionyl-tRNA(fMet) subsequently binds. Helps modulate mRNA selection, yielding the 30S pre-initiation complex (PIC). Upon addition of the 50S ribosomal subunit IF-1, IF-2 and IF-3 are released leaving the mature 70S translation initiation complex. The protein is Translation initiation factor IF-1 of Streptococcus agalactiae serotype Ia (strain ATCC 27591 / A909 / CDC SS700).